A 100-amino-acid polypeptide reads, in one-letter code: Integration host factor subunit alpha 2 (100 aa).

The protein belongs to the bacterial histone-like protein family. As to quaternary structure, heterodimer of an alpha and a beta chain.

This protein is one of the two subunits of integration host factor, a specific DNA-binding protein that functions in genetic recombination as well as in transcriptional and translational control. The chain is Integration host factor subunit alpha 2 from Dechloromonas aromatica (strain RCB).